Here is a 549-residue protein sequence, read N- to C-terminus: Plant intracellular Ras-group-related LRR protein 4 (549 aa).

Residues 119 to 140 (SPSSNGSVSSRPPLPPATTTAA) show a composition bias toward low complexity. A disordered region spans residues 119–167 (SPSSNGSVSSRPPLPPATTTAARSDSQSSLNFSERAPVRPKDMVSRDDS). Residues 141–150 (RSDSQSSLNF) show a composition bias toward polar residues. Residues 154–167 (APVRPKDMVSRDDS) show a composition bias toward basic and acidic residues. Serine 167 is modified (phosphoserine). 11 LRR repeats span residues 245 to 268 (LSSLTSLDLSENHIVVLPNTIGGL), 269 to 291 (SSLTKLDLHSNRIGQLPESIGEL), 293 to 313 (NLVYLNLGSNQLSSLPSAFSR), 314 to 337 (LVRLEELDLSCNNLPILPESIGSL), 339 to 360 (SLKKLDVETNDIEEIPYSIGGC), 362 to 383 (SLIELRADYNKLKALPEAIGKI), 384 to 406 (TTLEILSVRYNNIRQLPTTMSSL), 407 to 430 (ASLKELDVSFNELESVPESLCFAT), 432 to 454 (LVKLNIGNNFADMVSLPRSIGNL), 455 to 476 (EMLEELDISNNQIRVLPDSFKM), and 478 to 500 (TKLRVFRAQENPLHIPPRDIAEK). A GVYW; degenerate motif is present at residues 501-508 (GPQAVVQY).

This sequence belongs to the SHOC2 family. Widely expressed.

Functionally, leucine-rich repeat protein that likely mediates protein interactions, possibly in the context of signal transduction. The protein is Plant intracellular Ras-group-related LRR protein 4 (PIRL4) of Arabidopsis thaliana (Mouse-ear cress).